The sequence spans 546 residues: Glucose-6-phosphate isomerase (546 aa).

The Proton donor role is filled by glutamate 357. Residues histidine 389 and lysine 509 contribute to the active site.

The protein belongs to the GPI family.

The protein resides in the cytoplasm. It carries out the reaction alpha-D-glucose 6-phosphate = beta-D-fructose 6-phosphate. It functions in the pathway carbohydrate biosynthesis; gluconeogenesis. The protein operates within carbohydrate degradation; glycolysis; D-glyceraldehyde 3-phosphate and glycerone phosphate from D-glucose: step 2/4. Functionally, catalyzes the reversible isomerization of glucose-6-phosphate to fructose-6-phosphate. This chain is Glucose-6-phosphate isomerase, found in Anaeromyxobacter dehalogenans (strain 2CP-1 / ATCC BAA-258).